The chain runs to 380 residues: Capsular polysaccharide biosynthesis glycosyltransferase CapM (380 aa).

This sequence belongs to the glycosyltransferase group 1 family. Glycosyltransferase 4 subfamily.

Its pathway is capsule biogenesis; capsule polysaccharide biosynthesis. Functionally, required for the biosynthesis of type 1 capsular polysaccharide. The protein is Capsular polysaccharide biosynthesis glycosyltransferase CapM (capM) of Staphylococcus aureus.